A 393-amino-acid chain; its full sequence is Meiotic driver wtf19 (393 aa).

Residues 1-98 (MKNKYYPLRS…SSGTADNSST (98 aa)) form a disordered region. The segment covering 11 to 29 (SMDELSAKNDNEIDLEKGP) has biased composition (basic and acidic residues). 2 stretches are compositionally biased toward polar residues: residues 57–72 (GANN…STTP) and 89–98 (SSGTADNSST). The next 8 helical transmembrane spans lie at 104 to 124 (AFLS…YLTY), 137 to 157 (WVYF…LWYF), 167 to 187 (VTVI…AQCV), 208 to 228 (CVKV…IGLF), 233 to 253 (EMMI…FGCV), 269 to 289 (CTIS…FWTF), 296 to 316 (LAKV…TMFL), and 332 to 352 (VLFI…GALI).

This sequence belongs to the WTF family. As to quaternary structure, homomer. Forms protein aggregates. The two isoforms can interact with each other and with themselves. High sequence similarity is required for their interaction.

Its subcellular location is the spore membrane. The protein resides in the vacuole membrane. It is found in the ascus epiplasm. It localises to the cytoplasm. The protein localises to the endoplasmic reticulum membrane. Promotes unequal transmission of alleles from the parental zygote to progeny spores by acting as poison/antidote system where the poison and antidote proteins are produced from the same locus; the poison component is trans-acting and targets all spores within an ascus whereas the antidote component is spore-specific, leading to poisoning of all progeny that do not inherit the allele. Functionally, localizes isoform 2 to the vacuole thereby facilitating its degradation. Its function is as follows. Forms toxic aggregates that disrupt spore maturation. In Schizosaccharomyces pombe (strain 972 / ATCC 24843) (Fission yeast), this protein is Meiotic driver wtf19.